The chain runs to 79 residues: Short neurotoxin 7 (79 aa).

Residues 1–21 (MKTLLLTLVMVTIMCLDLGYT) form the signal peptide. 4 disulfide bridges follow: Cys24-Cys41, Cys34-Cys59, Cys63-Cys71, and Cys72-Cys77.

Belongs to the three-finger toxin family. Short-chain subfamily. Type III alpha-neurotoxin sub-subfamily. Expressed by the venom gland.

It is found in the secreted. Binds with high affinity to muscle nicotinic acetylcholine receptor (nAChR) and hinders acetylcholine binding to the receptor, thereby impairing neuromuscular transmission. Competes with the binding of alpha-bungarotoxin on muscle AChR (from Torpedo) (IC(50)=0.30 uM). In vivo, causes muscle paralysis, spasms and increased respiration. This Pseudonaja textilis (Eastern brown snake) protein is Short neurotoxin 7.